Consider the following 97-residue polypeptide: Cystatin-A (97 aa).

N-acetylmethionine is present on methionine 1. The short motif at 46 to 50 (QVVAG) is the Secondary area of contact element.

It belongs to the cystatin family.

The protein resides in the cytoplasm. Functionally, this is an intracellular thiol proteinase inhibitor. The protein is Cystatin-A (Csta) of Mus musculus (Mouse).